The chain runs to 170 residues: ATP synthase subunit b (170 aa).

The helical transmembrane segment at 30 to 50 (FFFVLAIFLVVLGVIGTFVVP) threads the bilayer.

The protein belongs to the ATPase B chain family. F-type ATPases have 2 components, F(1) - the catalytic core - and F(0) - the membrane proton channel. F(1) has five subunits: alpha(3), beta(3), gamma(1), delta(1), epsilon(1). F(0) has three main subunits: a(1), b(2) and c(10-14). The alpha and beta chains form an alternating ring which encloses part of the gamma chain. F(1) is attached to F(0) by a central stalk formed by the gamma and epsilon chains, while a peripheral stalk is formed by the delta and b chains.

The protein localises to the cell membrane. Functionally, f(1)F(0) ATP synthase produces ATP from ADP in the presence of a proton or sodium gradient. F-type ATPases consist of two structural domains, F(1) containing the extramembraneous catalytic core and F(0) containing the membrane proton channel, linked together by a central stalk and a peripheral stalk. During catalysis, ATP synthesis in the catalytic domain of F(1) is coupled via a rotary mechanism of the central stalk subunits to proton translocation. In terms of biological role, component of the F(0) channel, it forms part of the peripheral stalk, linking F(1) to F(0). The sequence is that of ATP synthase subunit b from Mycobacterium leprae (strain TN).